The following is a 213-amino-acid chain: Cytochrome b-c1 complex subunit Rieske, mitochondrial (213 aa).

The transit peptide at M1 to L29 directs the protein to the mitochondrion. The Mitochondrial matrix portion of the chain corresponds to S30–Q47. The chain crosses the membrane as a helical span at residues G48 to S77. Residues S78–G213 lie on the Mitochondrial intermembrane side of the membrane. Positions R116–L211 constitute a Rieske domain. Residues C156, H158, C175, and H178 each contribute to the [2Fe-2S] cluster site. C161 and C177 are oxidised to a cystine.

It belongs to the Rieske iron-sulfur protein family. In terms of assembly, component of the ubiquinol-cytochrome c oxidoreductase (cytochrome b-c1 complex, complex III, CIII), a multisubunit enzyme composed of 10 subunits. The complex is composed of 3 respiratory subunits cytochrome b (COB), cytochrome c1 (CYT1) and Rieske protein (RIP1), 2 core protein subunits COR1 and QCR2, and 5 low-molecular weight protein subunits QCR6, QCR7, QCR8, QCR9 and QCR10. The complex exists as an obligatory dimer and forms supercomplexes (SCs) in the inner mitochondrial membrane with a monomer or a dimer of cytochrome c oxidase (complex IV, CIV), resulting in 2 different assemblies (supercomplexes III(2)IV and III(2)IV(2)). It depends on [2Fe-2S] cluster as a cofactor.

It localises to the mitochondrion inner membrane. It catalyses the reaction a quinol + 2 Fe(III)-[cytochrome c](out) = a quinone + 2 Fe(II)-[cytochrome c](out) + 2 H(+)(out). In terms of biological role, component of the ubiquinol-cytochrome c oxidoreductase, a multisubunit transmembrane complex that is part of the mitochondrial electron transport chain which drives oxidative phosphorylation. The complex plays an important role in the uptake of multiple carbon sources present in different host niches. The protein is Cytochrome b-c1 complex subunit Rieske, mitochondrial of Candida albicans (strain SC5314 / ATCC MYA-2876) (Yeast).